Here is a 239-residue protein sequence, read N- to C-terminus: Orotidine 5'-phosphate decarboxylase (239 aa).

Substrate-binding positions include Asp-12, Lys-34, 61 to 70 (DLKFHDIPNT), Thr-125, Arg-188, Gln-197, Gly-217, and Arg-218. Lys-63 (proton donor) is an active-site residue.

The protein belongs to the OMP decarboxylase family. Type 1 subfamily. As to quaternary structure, homodimer.

It carries out the reaction orotidine 5'-phosphate + H(+) = UMP + CO2. The protein operates within pyrimidine metabolism; UMP biosynthesis via de novo pathway; UMP from orotate: step 2/2. In terms of biological role, catalyzes the decarboxylation of orotidine 5'-monophosphate (OMP) to uridine 5'-monophosphate (UMP). The protein is Orotidine 5'-phosphate decarboxylase of Syntrophomonas wolfei subsp. wolfei (strain DSM 2245B / Goettingen).